The primary structure comprises 188 residues: Large ribosomal subunit protein eL18 (188 aa).

A Glycyl lysine isopeptide (Lys-Gly) (interchain with G-Cter in SUMO2) cross-link involves residue K119. Phosphoserine is present on S130. The interval 150-188 (RHFGKAPRTPHSHTKPYVRSKGRKFERARGRWASRGYKN) is disordered. 2 stretches are compositionally biased toward basic residues: residues 151 to 171 (HFGKAPRTPHSHTKPYVRSKG) and 179 to 188 (GRWASRGYKN). T158 is subject to Phosphothreonine. K164 participates in a covalent cross-link: Glycyl lysine isopeptide (Lys-Gly) (interchain with G-Cter in SUMO2).

The protein belongs to the eukaryotic ribosomal protein eL18 family. In terms of assembly, component of the large ribosomal subunit.

It is found in the cytoplasm. The protein resides in the cytosol. Its subcellular location is the rough endoplasmic reticulum. In terms of biological role, component of the large ribosomal subunit. The ribosome is a large ribonucleoprotein complex responsible for the synthesis of proteins in the cell. The protein is Large ribosomal subunit protein eL18 (RPL18) of Oryctolagus cuniculus (Rabbit).